The following is a 231-amino-acid chain: 7-cyano-7-deazaguanine synthase (231 aa).

ATP is bound at residue 7–17 (LSSGLDSVAAL). Zn(2+) contacts are provided by Cys195, Cys203, Cys206, and Cys209.

This sequence belongs to the QueC family. Zn(2+) is required as a cofactor.

It carries out the reaction 7-carboxy-7-deazaguanine + NH4(+) + ATP = 7-cyano-7-deazaguanine + ADP + phosphate + H2O + H(+). The protein operates within purine metabolism; 7-cyano-7-deazaguanine biosynthesis. In terms of biological role, catalyzes the ATP-dependent conversion of 7-carboxy-7-deazaguanine (CDG) to 7-cyano-7-deazaguanine (preQ(0)). The polypeptide is 7-cyano-7-deazaguanine synthase (Methanosarcina barkeri (strain Fusaro / DSM 804)).